A 180-amino-acid polypeptide reads, in one-letter code: MRILGIDPGLRVTGFGVIDVSGHRLAYVTSGVIRTPTADLATRLGTIFQGVSTIVRDHAPDQAAIEKVFVNVNPQSTLLLGQARGAAICGLVAGGLPVAEYTALQLKQAVVGYGRATKTQMQDMVTRLLNLSGQPGSDAADALGMAICHAHGGNTLSTLGGLAPALAQKGLRVRRGRLVG.

Residues Asp7, Glu66, and Asp138 contribute to the active site. Residues Asp7, Glu66, and Asp138 each contribute to the Mg(2+) site.

It belongs to the RuvC family. Homodimer which binds Holliday junction (HJ) DNA. The HJ becomes 2-fold symmetrical on binding to RuvC with unstacked arms; it has a different conformation from HJ DNA in complex with RuvA. In the full resolvosome a probable DNA-RuvA(4)-RuvB(12)-RuvC(2) complex forms which resolves the HJ. Mg(2+) serves as cofactor.

The protein resides in the cytoplasm. It carries out the reaction Endonucleolytic cleavage at a junction such as a reciprocal single-stranded crossover between two homologous DNA duplexes (Holliday junction).. The RuvA-RuvB-RuvC complex processes Holliday junction (HJ) DNA during genetic recombination and DNA repair. Endonuclease that resolves HJ intermediates. Cleaves cruciform DNA by making single-stranded nicks across the HJ at symmetrical positions within the homologous arms, yielding a 5'-phosphate and a 3'-hydroxyl group; requires a central core of homology in the junction. The consensus cleavage sequence is 5'-(A/T)TT(C/G)-3'. Cleavage occurs on the 3'-side of the TT dinucleotide at the point of strand exchange. HJ branch migration catalyzed by RuvA-RuvB allows RuvC to scan DNA until it finds its consensus sequence, where it cleaves and resolves the cruciform DNA. This chain is Crossover junction endodeoxyribonuclease RuvC, found in Burkholderia orbicola (strain MC0-3).